A 123-amino-acid polypeptide reads, in one-letter code: Alpha-lactalbumin (123 aa).

Residues 1–123 (KQFTKCELSQ…KLEQWLCEKE (123 aa)) form the C-type lysozyme domain. Disulfide bonds link cysteine 6–cysteine 120, cysteine 28–cysteine 111, cysteine 61–cysteine 77, and cysteine 73–cysteine 91. N-linked (GlcNAc...) asparagine glycosylation occurs at asparagine 45. 5 residues coordinate Ca(2+): lysine 79, aspartate 82, aspartate 84, aspartate 87, and aspartate 88.

This sequence belongs to the glycosyl hydrolase 22 family. Lactose synthase (LS) is a heterodimer of a catalytic component, beta1,4-galactosyltransferase (beta4Gal-T1) and a regulatory component, alpha-lactalbumin (LA). In terms of tissue distribution, mammary gland specific. Secreted in milk.

It is found in the secreted. Its function is as follows. Regulatory subunit of lactose synthase, changes the substrate specificity of galactosyltransferase in the mammary gland making glucose a good acceptor substrate for this enzyme. This enables LS to synthesize lactose, the major carbohydrate component of milk. In other tissues, galactosyltransferase transfers galactose onto the N-acetylglucosamine of the oligosaccharide chains in glycoproteins. The polypeptide is Alpha-lactalbumin (LALBA) (Papio cynocephalus (Yellow baboon)).